Here is a 5087-residue protein sequence, read N- to C-terminus: Nonribosomal peptide synthetase sidC (5087 aa).

The segment at 165-563 is adenylation 1; sequence HEMVRHTGNE…NGELQCMGRI (399 aa). In terms of domain architecture, Carrier 1 spans 671-744; it reads EPAGDIEQKI…KMAALVLKSQ (74 aa). An O-(pantetheine 4'-phosphoryl)serine modification is found at Ser-705. Residues 782–1112 form a condensation 1 region; it reads DIIPCSPIQT…LFDTLFVWQD (331 aa). Residues 1217–1611 are adenylation 2; the sequence is ELAKTDSERI…GRRDDLVKIR (395 aa). In terms of domain architecture, Carrier 2 spans 1740–1817; it reads ENLTDNEAKV…RLTRKISQSI (78 aa). An O-(pantetheine 4'-phosphoryl)serine modification is found at Ser-1777. Positions 1855-2272 are condensation 2; it reads KILPCTSLQE…RVMDFSLVES (418 aa). A Carrier 3 domain is found at 2302-2378; that stretch reads EEWSAESLEI…EIASVLQGSK (77 aa). Position 2339 is an O-(pantetheine 4'-phosphoryl)serine (Ser-2339). The interval 2419–2831 is condensation 3; that stretch reads PCTTPQAGML…STSSSLDTAS (413 aa). The interval 2860–3258 is adenylation 3; sequence ATRHPSRVAL…GRIDDQVKLR (399 aa). The Carrier 4 domain occupies 3387 to 3464; it reads TEDTDTIRKI…LLAKAVESPD (78 aa). Position 3424 is an O-(pantetheine 4'-phosphoryl)serine (Ser-3424). The condensation 4 stretch occupies residues 3506–3910; sequence ITPCTSLQDG…RSLVEEPFSN (405 aa). The Carrier 5 domain occupies 3943 to 4019; sequence FQWSQAASLL…TMMAEVTVNG (77 aa). Residue Ser-3980 is modified to O-(pantetheine 4'-phosphoryl)serine. Residues 4051 to 4416 form a condensation 5 region; it reads EHIYPATPLQ…EYSICVELEA (366 aa). Residues 4496–4569 form the Carrier 6 domain; that stretch reads SLLEERIRDT…KMAEIVNSAR (74 aa). The residue at position 4530 (Ser-4530) is an O-(pantetheine 4'-phosphoryl)serine. Positions 4610–4913 are condensation 6; sequence FLPATAGQVY…IQSDLHEIGS (304 aa). The disordered stretch occupies residues 5013–5048; the sequence is DVYKVSPPGSQLSQDSPEKQEANNKPSPQPSVDIEA.

It belongs to the NRP synthetase family.

The protein operates within siderophore biosynthesis. Its function is as follows. Nonribosomal peptide synthetase; part of the siderophore biosynthetic pathway. Arthroderma benhamiae produces 2 types of extracellular siderophores, ferrichrome C and ferricrocin. The biosynthesis of these siderophores depends on the hydroxylation of ornithine to N(5)-hydroxyornithine, catalyzed by the monooxygenase sidA. The structure of ferricrocin differs from ferrichrome C only by a serine for alanine substitution and the assembly of both siderophores is suggested to be performed by the nonribosomal peptide synthase (NRPS) sidC. The chain is Nonribosomal peptide synthetase sidC from Arthroderma benhamiae (strain ATCC MYA-4681 / CBS 112371) (Trichophyton mentagrophytes).